A 301-amino-acid polypeptide reads, in one-letter code: ATP synthase gamma chain (301 aa).

It belongs to the ATPase gamma chain family. As to quaternary structure, F-type ATPases have 2 components, CF(1) - the catalytic core - and CF(0) - the membrane proton channel. CF(1) has five subunits: alpha(3), beta(3), gamma(1), delta(1), epsilon(1). CF(0) has three main subunits: a, b and c.

The protein localises to the cell inner membrane. In terms of biological role, produces ATP from ADP in the presence of a proton gradient across the membrane. The gamma chain is believed to be important in regulating ATPase activity and the flow of protons through the CF(0) complex. In Helicobacter pylori (strain ATCC 700392 / 26695) (Campylobacter pylori), this protein is ATP synthase gamma chain.